Reading from the N-terminus, the 61-residue chain is Metallothionein-2E (61 aa).

Position 1 is an N-acetylmethionine (Met-1). Residues 1–29 form a beta region; it reads MDPNCSCATRDSCACASSCKCKECKCTSC. Residues Cys-5, Cys-7, Cys-13, Cys-15, Cys-19, Cys-21, Cys-24, Cys-26, Cys-29, Cys-33, Cys-34, Cys-36, Cys-37, Cys-41, Cys-44, Cys-48, Cys-50, Cys-57, Cys-59, and Cys-60 each coordinate a divalent metal cation. Positions 30–61 are alpha; the sequence is KKSCCSCCPAGCTKCAQGCICKGALDKCSCCA.

This sequence belongs to the metallothionein superfamily. Type 1 family. Monomer.

In terms of biological role, metallothioneins have a high content of cysteine residues that bind various heavy metals; these proteins are transcriptionally regulated by both heavy metals and glucocorticoids. The sequence is that of Metallothionein-2E from Oryctolagus cuniculus (Rabbit).